A 332-amino-acid chain; its full sequence is Probable isoaspartyl peptidase/L-asparaginase CG7860 (332 aa).

Residue T188 is the Nucleophile of the active site. Substrate is bound by residues 216 to 219 (RIGD) and 239 to 242 (TGHG).

The protein belongs to the Ntn-hydrolase family. In terms of assembly, heterodimer of an alpha and beta chain produced by autocleavage. Post-translationally, cleaved into an alpha and beta chain by autocatalysis; this activates the enzyme. The N-terminal residue of the beta subunit is responsible for the nucleophile hydrolase activity.

It carries out the reaction L-asparagine + H2O = L-aspartate + NH4(+). The enzyme catalyses Cleavage of a beta-linked Asp residue from the N-terminus of a polypeptide.. In terms of biological role, has both L-asparaginase and beta-aspartyl peptidase activity. Does not have aspartylglucosaminidase activity and is inactive toward GlcNAc-L-Asn. Likewise, has no activity toward glutamine. The protein is Probable isoaspartyl peptidase/L-asparaginase CG7860 of Drosophila melanogaster (Fruit fly).